Consider the following 310-residue polypeptide: Homoserine kinase (310 aa).

Position 91-101 (91-101 (PIGSGLGSSAC)) interacts with ATP.

It belongs to the GHMP kinase family. Homoserine kinase subfamily.

It localises to the cytoplasm. It catalyses the reaction L-homoserine + ATP = O-phospho-L-homoserine + ADP + H(+). The protein operates within amino-acid biosynthesis; L-threonine biosynthesis; L-threonine from L-aspartate: step 4/5. Its function is as follows. Catalyzes the ATP-dependent phosphorylation of L-homoserine to L-homoserine phosphate. The polypeptide is Homoserine kinase (Escherichia coli O6:H1 (strain CFT073 / ATCC 700928 / UPEC)).